The following is a 225-amino-acid chain: Ribonuclease HII (225 aa).

Positions 28-220 (DIIAGTDEVG…VKEYVDISQE (193 aa)) constitute an RNase H type-2 domain. The a divalent metal cation site is built by aspartate 34, glutamate 35, and aspartate 129.

Belongs to the RNase HII family. Mn(2+) is required as a cofactor. The cofactor is Mg(2+).

The protein localises to the cytoplasm. The enzyme catalyses Endonucleolytic cleavage to 5'-phosphomonoester.. Its function is as follows. Endonuclease that specifically degrades the RNA of RNA-DNA hybrids. The protein is Ribonuclease HII of Desulfotalea psychrophila (strain LSv54 / DSM 12343).